Here is a 71-residue protein sequence, read N- to C-terminus: UPF0346 protein SUB0487 (71 aa).

The protein belongs to the UPF0346 family.

In Streptococcus uberis (strain ATCC BAA-854 / 0140J), this protein is UPF0346 protein SUB0487.